A 104-amino-acid polypeptide reads, in one-letter code: Thioredoxin (104 aa).

One can recognise a Thioredoxin domain in the interval 2-104; the sequence is AIVKVTDSNF…NLAEVLDKHL (103 aa). Cysteine 29 and cysteine 32 are disulfide-bonded.

Belongs to the thioredoxin family.

Component of the thioredoxin-thioredoxin reductase system. Participates in various redox reactions through the reversible oxidation of its active center dithiol to a disulfide and catalyzes dithiol-disulfide exchange reactions. The protein is Thioredoxin (trxA) of Staphylococcus haemolyticus (strain JCSC1435).